Here is a 471-residue protein sequence, read N- to C-terminus: Protein translocase subunit SecF (471 aa).

A disordered region spans residues methionine 1–alanine 29. Over residues lysine 13 to asparagine 23 the composition is skewed to basic and acidic residues. 6 consecutive transmembrane segments (helical) span residues glycine 88–isoleucine 108, isoleucine 211–threonine 231, alanine 242–phenylalanine 262, alanine 267–phenylalanine 287, leucine 325–glycine 345, and leucine 355–threonine 375. The interval arginine 393 to arginine 471 is disordered. A compositionally biased stretch (polar residues) spans lysine 415 to glycine 431. Over residues proline 448–arginine 460 the composition is skewed to low complexity. The span at proline 461–arginine 471 shows a compositional bias: basic residues.

The protein belongs to the SecD/SecF family. SecF subfamily. Forms a complex with SecD. Part of the essential Sec protein translocation apparatus which comprises SecA, SecYEG and auxiliary proteins SecDF. Other proteins may also be involved.

The protein resides in the cell membrane. Functionally, part of the Sec protein translocase complex. Interacts with the SecYEG preprotein conducting channel. SecDF uses the proton motive force (PMF) to complete protein translocation after the ATP-dependent function of SecA. The sequence is that of Protein translocase subunit SecF from Mycobacterium leprae (strain TN).